We begin with the raw amino-acid sequence, 403 residues long: METLDGVVVVGGGPVGLLTALKLGKAGIKVVVLEAEPGVSPSPRAVAYMPPTAAALDRFGLLQDIRKRAVMCPDFAYRHGNGELIAKMDWSVLSQDTQYPYMLLLGQNHVSNVIFQHLRELPNVEIRWNHRVEEVDQDDAYVTIETSSPGGTSRLRARWLAATDGARSTVRQKIGLTFDGITWDERLVATNVFYDFSLHGYSRANFVHDPVDWAVVVQLDKTGLWRVCYGEDASLSDAEVRRRLPERFKRLLPGAPTPDQYRVDHLNPYRVHQRCAAEFRRGRVVLAGDAAHATNPMGGLGLSGGVLDAEHLAEALIAVIKNGASTKTLDEYSIDRRKVFLEFTSPTATANFTWMKESDPAQRIRDDAMFKEAGTDRAVMRQFLLDLEKLNGRRVIEKKLKAA.

FAD-binding positions include 6–35 and 279–289; these read GVVV…VLEA and FRRGRVVLAGD.

This sequence belongs to the PheA/TfdB FAD monooxygenase family. As to quaternary structure, monomer. The cofactor is FAD.

The catalysed reaction is 4-nitrophenol + NADPH + O2 + H(+) = 1,4-benzoquinone + nitrite + NADP(+) + H2O. Its pathway is xenobiotic degradation; 4-nitrophenol degradation. In terms of biological role, involved in the degradation of para-nitrophenol (4-NP). Catalyzes oxidation of 4-nitrophenol (4-NP) at position 4 with concomitant removal of the nitro group as nitrite and production of para-benzoquinone. This is Para-nitrophenol 4-monooxygenase (pnpA) from Pseudomonas sp. (strain WBC-3).